A 757-amino-acid chain; its full sequence is 5-methyltetrahydropteroyltriglutamate--homocysteine methyltransferase (757 aa).

5-methyltetrahydropteroyltri-L-glutamate is bound by residues 16 to 19 and Lys-112; that span reads RELK. Residues 433–435 and Glu-486 contribute to the L-homocysteine site; that span reads IGS. L-methionine contacts are provided by residues 433–435 and Glu-486; that span reads IGS. Residues 517–518 and Trp-563 contribute to the 5-methyltetrahydropteroyltri-L-glutamate site; that span reads RC. Asp-601 contributes to the L-homocysteine binding site. L-methionine is bound at residue Asp-601. Glu-607 contacts 5-methyltetrahydropteroyltri-L-glutamate. Residues His-643, Cys-645, and Glu-667 each coordinate Zn(2+). His-696 serves as the catalytic Proton donor. Cys-728 contacts Zn(2+).

This sequence belongs to the vitamin-B12 independent methionine synthase family. The cofactor is Zn(2+).

It carries out the reaction 5-methyltetrahydropteroyltri-L-glutamate + L-homocysteine = tetrahydropteroyltri-L-glutamate + L-methionine. The protein operates within amino-acid biosynthesis; L-methionine biosynthesis via de novo pathway; L-methionine from L-homocysteine (MetE route): step 1/1. Functionally, catalyzes the transfer of a methyl group from 5-methyltetrahydrofolate to homocysteine resulting in methionine formation. The polypeptide is 5-methyltetrahydropteroyltriglutamate--homocysteine methyltransferase (Histophilus somni (strain 2336) (Haemophilus somnus)).